Here is a 459-residue protein sequence, read N- to C-terminus: Ribulose bisphosphate carboxylase large chain (459 aa).

Residues 1-2 (MS) constitute a propeptide that is removed on maturation. Pro-3 carries the post-translational modification N-acetylproline. Residue Lys-14 is modified to N6,N6,N6-trimethyllysine. 2 residues coordinate substrate: Asn-123 and Thr-173. Lys-175 functions as the Proton acceptor in the catalytic mechanism. Lys-177 contributes to the substrate binding site. Mg(2+) contacts are provided by Lys-201, Asp-203, and Glu-204. N6-carboxylysine is present on Lys-201. His-294 (proton acceptor) is an active-site residue. Positions 295, 327, and 379 each coordinate substrate.

The protein belongs to the RuBisCO large chain family. Type I subfamily. Heterohexadecamer of 8 large chains and 8 small chains; disulfide-linked. The disulfide link is formed within the large subunit homodimers. It depends on Mg(2+) as a cofactor. Post-translationally, the disulfide bond which can form in the large chain dimeric partners within the hexadecamer appears to be associated with oxidative stress and protein turnover.

It localises to the plastid. The protein resides in the chloroplast. The catalysed reaction is 2 (2R)-3-phosphoglycerate + 2 H(+) = D-ribulose 1,5-bisphosphate + CO2 + H2O. The enzyme catalyses D-ribulose 1,5-bisphosphate + O2 = 2-phosphoglycolate + (2R)-3-phosphoglycerate + 2 H(+). Functionally, ruBisCO catalyzes two reactions: the carboxylation of D-ribulose 1,5-bisphosphate, the primary event in carbon dioxide fixation, as well as the oxidative fragmentation of the pentose substrate in the photorespiration process. Both reactions occur simultaneously and in competition at the same active site. This chain is Ribulose bisphosphate carboxylase large chain, found in Streptopus lanceolatus (Rose twisted stalk).